The following is a 239-amino-acid chain: Phosphoglycolate phosphatase (239 aa).

D14 acts as the Nucleophile in catalysis. Mg(2+)-binding residues include D14 and D16. K160 provides a ligand contact to substrate. Mg(2+)-binding residues include D183 and D187.

Belongs to the archaeal SPP-like hydrolase family. Requires Mg(2+) as cofactor.

It catalyses the reaction 2-phosphoglycolate + H2O = glycolate + phosphate. Catalyzes the dephosphorylation of 2-phosphoglycolate. This Aeropyrum pernix (strain ATCC 700893 / DSM 11879 / JCM 9820 / NBRC 100138 / K1) protein is Phosphoglycolate phosphatase.